An 87-amino-acid polypeptide reads, in one-letter code: Sodium channel neurotoxin MeuNaTxalpha-5* (87 aa).

Positions 1–19 (MNYLILISFALLVITGVES) are cleaved as a signal peptide. Positions 21–85 (RDAYIAKPHN…VPIRIPGKCH (65 aa)) constitute an LCN-type CS-alpha/beta domain. 4 disulfides stabilise this stretch: Cys-31–Cys-84, Cys-35–Cys-57, Cys-43–Cys-67, and Cys-47–Cys-69. Residues 86–87 (RR) constitute a propeptide, removed by a carboxypeptidase.

This sequence belongs to the long (4 C-C) scorpion toxin superfamily. Sodium channel inhibitor family. Alpha subfamily. Expressed by the venom gland.

It localises to the secreted. Alpha toxins bind voltage-independently at site-3 of sodium channels (Nav) and inhibit the inactivation of the activated channels, thereby blocking neuronal transmission. This toxin inhibits inactivation of Nav1.6/SCN8A (EC(50)=790 nM) and drosophila DmNav1 (EC(50)=280 nM). The toxin (1 uM) does not significantly shift the midpoint of activation at the two channels, but induces a significant depolarizing shift in the V(1/2) of inactivation of the channels. Has antimicrobial activity. This Mesobuthus eupeus (Lesser Asian scorpion) protein is Sodium channel neurotoxin MeuNaTxalpha-5*.